The primary structure comprises 485 residues: Probable cobyric acid synthase (485 aa).

Residues 250–435 enclose the GATase cobBQ-type domain; it reads EVEIAVIRLP…LHGLFDNENI (186 aa). Cys328 (nucleophile) is an active-site residue. His427 is an active-site residue.

It belongs to the CobB/CobQ family. CobQ subfamily.

It functions in the pathway cofactor biosynthesis; adenosylcobalamin biosynthesis. Functionally, catalyzes amidations at positions B, D, E, and G on adenosylcobyrinic A,C-diamide. NH(2) groups are provided by glutamine, and one molecule of ATP is hydrogenolyzed for each amidation. The polypeptide is Probable cobyric acid synthase (Methanosarcina acetivorans (strain ATCC 35395 / DSM 2834 / JCM 12185 / C2A)).